The sequence spans 116 residues: Flagellar transcriptional regulator FlhD (116 aa).

The protein belongs to the FlhD family. Homodimer; disulfide-linked. Forms a heterohexamer composed of two FlhC and four FlhD subunits. Each FlhC binds a FlhD dimer, forming a heterotrimer, and a hexamer assembles by dimerization of two heterotrimers.

It is found in the cytoplasm. Functions in complex with FlhC as a master transcriptional regulator that regulates transcription of several flagellar and non-flagellar operons by binding to their promoter region. Activates expression of class 2 flagellar genes, including fliA, which is a flagellum-specific sigma factor that turns on the class 3 genes. Also regulates genes whose products function in a variety of physiological pathways. The polypeptide is Flagellar transcriptional regulator FlhD (Yersinia pseudotuberculosis serotype O:1b (strain IP 31758)).